A 475-amino-acid polypeptide reads, in one-letter code: Ribulose bisphosphate carboxylase large chain (475 aa).

Residues N123 and T173 each coordinate substrate. K175 acts as the Proton acceptor in catalysis. K177 is a binding site for substrate. Mg(2+) contacts are provided by K201, D203, and E204. Residue K201 is modified to N6-carboxylysine. The active-site Proton acceptor is the H294. Substrate-binding residues include R295, H327, and S379.

It belongs to the RuBisCO large chain family. Type I subfamily. Heterohexadecamer of 8 large chains and 8 small chains. The cofactor is Mg(2+).

It localises to the plastid. It is found in the chloroplast. It catalyses the reaction 2 (2R)-3-phosphoglycerate + 2 H(+) = D-ribulose 1,5-bisphosphate + CO2 + H2O. It carries out the reaction D-ribulose 1,5-bisphosphate + O2 = 2-phosphoglycolate + (2R)-3-phosphoglycerate + 2 H(+). RuBisCO catalyzes two reactions: the carboxylation of D-ribulose 1,5-bisphosphate, the primary event in carbon dioxide fixation, as well as the oxidative fragmentation of the pentose substrate in the photorespiration process. Both reactions occur simultaneously and in competition at the same active site. The sequence is that of Ribulose bisphosphate carboxylase large chain from Bigelowiella natans (Pedinomonas minutissima).